A 683-amino-acid polypeptide reads, in one-letter code: Putative boron transporter 5 (683 aa).

Over 1–38 the chain is Cytoplasmic; that stretch reads MEEERVEGSKRPFQGIIRDVKGRALCYKQDWIAGLRSG. The chain crosses the membrane as a helical span at residues 39-59; the sequence is FGILAPTTYVFFASALPVIAF. Residues 60–80 are Extracellular-facing; sequence GEQLSHDTERSLSTVETLAST. Residues 81-101 traverse the membrane as a helical segment; the sequence is ALCGVIHSLLGGQPLLILGVA. The Cytoplasmic portion of the chain corresponds to 102–126; the sequence is EPTVLMYKYLYDFAKGRPELGKQLY. A helical membrane pass occupies residues 127-147; sequence LAWVAWVCVWTALLLFLMAIF. Residues 148-158 lie on the Extracellular side of the membrane; sequence NMAYIINRFTR. The chain crosses the membrane as a helical span at residues 159 to 179; sequence IAGELFGMLIAVLFLQQTIKG. The Cytoplasmic segment spans residues 180 to 200; it reads MVSEFRIPKGEDSKLEKYQFE. The helical transmembrane segment at 201 to 221 threads the bilayer; the sequence is WLYTNGLLGLIFTVGLVYTAL. Topologically, residues 222 to 238 are extracellular; that stretch reads KSRKARSWPYGTGCCRS. Residues 239 to 259 traverse the membrane as a helical segment; that stretch reads FVADYGVPLMVVVWTALSFST. The Cytoplasmic portion of the chain corresponds to 260-294; sequence PSKLPSGVPRRLVSPLPWDSVSLTHWTVIKDMGKV. A helical membrane pass occupies residues 295–315; it reads SPGYIFAAFIPALMIAGLYFF. The Extracellular segment spans residues 316–335; the sequence is DHSVVSQLAQQKEFNLKNPS. A helical transmembrane segment spans residues 336–356; sequence AYHYDILLLGFMVLICGMLGL. The Cytoplasmic segment spans residues 357-477; that stretch reads PPSNGVLPQS…EQRVSNLLQS (121 aa). Residues 478–498 form a helical membrane-spanning segment; the sequence is LLVIGAVFALPVIKLIPTSLL. Residues 499–565 are Extracellular-facing; sequence WGYFAYMAID…QILYFGLCYG (67 aa). Residues 566–586 traverse the membrane as a helical segment; that stretch reads VTWIPVAGIMFPVLFFLLVAI. Topologically, residues 587-683 are cytoplasmic; that stretch reads RQYLLPKLFK…GDGDMSSSRE (97 aa).

The protein belongs to the anion exchanger (TC 2.A.31.3) family.

It localises to the membrane. Putative boron transporter. Boron is essential for maintaining the integrity of plants cell walls. The chain is Putative boron transporter 5 (BOR5) from Arabidopsis thaliana (Mouse-ear cress).